Here is a 258-residue protein sequence, read N- to C-terminus: Distal membrane-arm assembly complex protein 2 (258 aa).

It belongs to the ATP synthase subunit s family. In terms of assembly, interacts with incompletely assembled mitochondrial NADH:ubiquinone oxidoreductase complex (complex I).

It is found in the mitochondrion. Functionally, required for the assembly of the mitochondrial NADH:ubiquinone oxidoreductase complex (complex I). Involved in the assembly of the distal region of complex I. The protein is Distal membrane-arm assembly complex protein 2 (Dmac2) of Mus musculus (Mouse).